The following is a 412-amino-acid chain: 2,3-bisphosphoglycerate-independent phosphoglycerate mutase (412 aa).

It belongs to the BPG-independent phosphoglycerate mutase family. A-PGAM subfamily.

The catalysed reaction is (2R)-2-phosphoglycerate = (2R)-3-phosphoglycerate. Its pathway is carbohydrate degradation; glycolysis; pyruvate from D-glyceraldehyde 3-phosphate: step 3/5. In terms of biological role, catalyzes the interconversion of 2-phosphoglycerate and 3-phosphoglycerate. The chain is 2,3-bisphosphoglycerate-independent phosphoglycerate mutase (apgM) from Pyrococcus horikoshii (strain ATCC 700860 / DSM 12428 / JCM 9974 / NBRC 100139 / OT-3).